The primary structure comprises 203 residues: Xrcc4-like factor 1 (203 aa).

It belongs to the XRCC4-XLF family. XLF subfamily.

The protein resides in the nucleus. Its function is as follows. Involved in double-strand break repair via non-homologous end joining (NHEJ); the repair of a double-strand break in DNA in which the two broken ends are rejoined with little or no sequence complementarity. Has a role in meiosis. In Schizosaccharomyces pombe (strain 972 / ATCC 24843) (Fission yeast), this protein is Xrcc4-like factor 1 (xlf1).